Consider the following 315-residue polypeptide: Olfactory receptor 2V1 (315 aa).

The next 7 helical transmembrane spans lie at Thr-31–Tyr-51, Pro-59–Val-79, Ile-100–Ala-120, Ile-145–Met-165, Phe-196–Val-216, Leu-239–Ile-259, and Lys-273–Leu-293. A disulfide bridge links Cys-98 with Cys-180.

Belongs to the G-protein coupled receptor 1 family.

It localises to the cell membrane. In terms of biological role, odorant receptor. Activated by (+) and (-)-limonene. The polypeptide is Olfactory receptor 2V1 (Mus musculus (Mouse)).